The chain runs to 1296 residues: Probable serine/threonine protein kinase IREH1 (1296 aa).

Disordered stretches follow at residues 1–274, 457–480, and 524–553; these read MVFK…SESP, SGAGRSYSAAKVPSTKKAYSQEQH, and SPALKTVKEAPASEEQNDSKVEPPNIVGSR. The segment covering 10–32 has biased composition (low complexity); it reads SSKKSGSSSPDSSNSPRSVGSNS. The residue at position 32 (Ser32) is a Phosphoserine. Basic and acidic residues-rich tracts occupy residues 68-77, 101-112, and 178-208; these read DGLKKKDGSS, EVKKPPPPEVKE, and RKKEAGSSKLGLEENMDRTRPSDNKSDRDSL. A compositionally biased stretch (low complexity) spans 214–249; that stretch reads PPRSLSPTLPPSGSRLQNVASSSGTGRSEMSSGRSG. The C2H2-type; atypical zinc-finger motif lies at 602 to 621; that stretch reads CRICEEEVPTTHVEDHSRVC. The segment at 724–750 is disordered; sequence FGPKSDQGMTTSSASSMTPRSPIPTPR. A compositionally biased stretch (polar residues) spans 730–740; that stretch reads QGMTTSSASSM. The Protein kinase domain occupies 882-1171; it reads FEIIKPISRG…AAEVKQHIFF (290 aa). ATP is bound by residues 888–896 and Lys911; that span reads ISRGAFGRV. Residue Asp1005 is the Proton acceptor of the active site. At Ser1070 the chain carries Phosphoserine. In terms of domain architecture, AGC-kinase C-terminal spans 1172-1277; it reads KDINWDTLAR…KNLSQLASIN (106 aa). Residues 1214–1245 form a disordered region; that stretch reads PSGEVPDYSDADSMTNSSGCSSNHHEEGEAEE. Polar residues predominate over residues 1225–1235; sequence DSMTNSSGCSS. The span at 1236–1245 shows a compositional bias: basic and acidic residues; the sequence is NHHEEGEAEE.

This sequence belongs to the protein kinase superfamily. AGC Ser/Thr protein kinase family.

The catalysed reaction is L-seryl-[protein] + ATP = O-phospho-L-seryl-[protein] + ADP + H(+). It catalyses the reaction L-threonyl-[protein] + ATP = O-phospho-L-threonyl-[protein] + ADP + H(+). Functionally, may be involved in root hair elongation. The chain is Probable serine/threonine protein kinase IREH1 from Arabidopsis thaliana (Mouse-ear cress).